A 98-amino-acid polypeptide reads, in one-letter code: NADH-ubiquinone oxidoreductase chain 4L (98 aa).

Helical transmembrane passes span 1–21 (MSLV…GLLM), 29–49 (ALLC…LTIL), and 61–81 (IILL…LIMI).

It belongs to the complex I subunit 4L family. As to quaternary structure, core subunit of respiratory chain NADH dehydrogenase (Complex I) which is composed of 45 different subunits.

The protein resides in the mitochondrion inner membrane. The catalysed reaction is a ubiquinone + NADH + 5 H(+)(in) = a ubiquinol + NAD(+) + 4 H(+)(out). In terms of biological role, core subunit of the mitochondrial membrane respiratory chain NADH dehydrogenase (Complex I) which catalyzes electron transfer from NADH through the respiratory chain, using ubiquinone as an electron acceptor. Part of the enzyme membrane arm which is embedded in the lipid bilayer and involved in proton translocation. The polypeptide is NADH-ubiquinone oxidoreductase chain 4L (MT-ND4L) (Monodon monoceros (Narwhal)).